The following is a 295-amino-acid chain: Deleted in azoospermia-like (295 aa).

Positions 1-10 (MSTANPETPN) are enriched in polar residues. Positions 1 to 25 (MSTANPETPNSTISREASTQSSSAA) are disordered. The segment covering 11–25 (STISREASTQSSSAA) has biased composition (low complexity). Residues 40 to 115 (NTVFVGGIDV…KKLKLGPAIR (76 aa)) form the RRM domain. A homodimerization region spans residues 80-132 (KGYGFVSFFNDVDVQKIVESQINFHGKKLKLGPAIRKQNLCAYHVQPRPLVFN). The region spanning 167 to 190 (AYPTYPNSPVQVITGYQLPVYNYQ) is the DAZ domain. Phosphotyrosine is present on tyrosine 276.

The protein belongs to the RRM DAZ family. In terms of assembly, homodimer and heterodimer. Multiple DAZL RRMs can bind to a single RNA containing multiple GUU triplets. Forms a heterodimer with DAZ. Interacts with BOLL, DAZAP1 and DAZAP2. Interacts with PUM2. Testis specific.

The protein resides in the cytoplasm. Its subcellular location is the nucleus. Its function is as follows. RNA-binding protein, which is essential for gametogenesis in both males and females. Plays a central role during spermatogenesis. Acts by binding to the 3'-UTR of mRNA, specifically recognizing GUU triplets, and thereby regulating the translation of key transcripts. This is Deleted in azoospermia-like (DAZL) from Homo sapiens (Human).